The primary structure comprises 527 residues: EGF domain-specific O-linked N-acetylglucosamine transferase (527 aa).

Residues 1 to 17 (MLMLFVFGVLLHEVSLS) form the signal peptide. Residues 295–297 (DYD) carry the Required for optimal activity motif. N-linked (GlcNAc...) asparagine glycosylation occurs at Asn354. A Prevents secretion from ER motif is present at residues 524–527 (HDEL).

The protein belongs to the glycosyltransferase 61 family.

It localises to the endoplasmic reticulum lumen. It carries out the reaction L-seryl-[protein] + UDP-N-acetyl-alpha-D-glucosamine = 3-O-(N-acetyl-beta-D-glucosaminyl)-L-seryl-[protein] + UDP + H(+). It catalyses the reaction L-threonyl-[protein] + UDP-N-acetyl-alpha-D-glucosamine = 3-O-(N-acetyl-beta-D-glucosaminyl)-L-threonyl-[protein] + UDP + H(+). In terms of biological role, catalyzes the transfer of a single N-acetylglucosamine from UDP-GlcNAc to a serine or threonine residue in extracellular proteins resulting in their modification with a beta-linked N-acetylglucosamine (O-GlcNAc). Specifically glycosylates the Thr residue located between the fifth and sixth conserved cysteines of folded EGF-like domains. The protein is EGF domain-specific O-linked N-acetylglucosamine transferase (EOGT) of Pan troglodytes (Chimpanzee).